A 126-amino-acid polypeptide reads, in one-letter code: Small ribosomal subunit protein uS13 (126 aa).

A disordered region spans residues 98 to 126 (PLRGQSTKNNARTRKGKKKTVANKKKATK). Residues 108-126 (ARTRKGKKKTVANKKKATK) show a composition bias toward basic residues.

This sequence belongs to the universal ribosomal protein uS13 family. As to quaternary structure, part of the 30S ribosomal subunit. Forms a loose heterodimer with protein S19. Forms two bridges to the 50S subunit in the 70S ribosome.

Its function is as follows. Located at the top of the head of the 30S subunit, it contacts several helices of the 16S rRNA. In the 70S ribosome it contacts the 23S rRNA (bridge B1a) and protein L5 of the 50S subunit (bridge B1b), connecting the 2 subunits; these bridges are implicated in subunit movement. Contacts the tRNAs in the A and P-sites. The protein is Small ribosomal subunit protein uS13 of Parabacteroides distasonis (strain ATCC 8503 / DSM 20701 / CIP 104284 / JCM 5825 / NCTC 11152).